Here is a 277-residue protein sequence, read N- to C-terminus: MIDTPLHTGLGLRRGLLPELLEMQAGEVDFLECAPENWIGVGGAFGQKLECLAERFPIACHGLSLSLGGTAPLDEAFLGLTRRFLDRHQVNLYSEHLSYCSDDGHLYDLLPIPFTEEAVHHVSARIRQAQDLLGRRIAVENISYYAAPYQAMSELDFIRAVLDEADCDLLLDVNNVFVNACNHRYEAHAFLAGIPRERVVGMHVAGHYDEAPDLKVDTHGAPVKEDVWALFARACERFGAQPTVLERDFNYPPLAELLAETARIRDLQQRHGGPRHG.

The protein belongs to the UPF0276 family.

The chain is UPF0276 protein PSEEN3355 from Pseudomonas entomophila (strain L48).